Here is a 699-residue protein sequence, read N- to C-terminus: Elongation factor G (699 aa).

A tr-type G domain is found at 8–290; it reads NKYRNLGIMA…KVIELLPSPV (283 aa). GTP is bound by residues 17–24, 88–92, and 142–145; these read AHIDAGKT, DTPGH, and NKMD.

The protein belongs to the TRAFAC class translation factor GTPase superfamily. Classic translation factor GTPase family. EF-G/EF-2 subfamily.

The protein resides in the cytoplasm. In terms of biological role, catalyzes the GTP-dependent ribosomal translocation step during translation elongation. During this step, the ribosome changes from the pre-translocational (PRE) to the post-translocational (POST) state as the newly formed A-site-bound peptidyl-tRNA and P-site-bound deacylated tRNA move to the P and E sites, respectively. Catalyzes the coordinated movement of the two tRNA molecules, the mRNA and conformational changes in the ribosome. This is Elongation factor G from Dichelobacter nodosus (strain VCS1703A).